We begin with the raw amino-acid sequence, 42 residues long: Kappa-actitoxin-Ael2a (42 aa).

Cystine bridges form between Cys-4-Cys-37, Cys-6-Cys-30, and Cys-20-Cys-38.

This sequence belongs to the sea anemone type 3 (BDS) potassium channel toxin family.

The protein resides in the secreted. Its subcellular location is the nematocyst. Its function is as follows. Peptide with both antimicrobial and neurotoxin activities. This toxin acts both on ERG potassium channels and sodium channels. It potently and reversibly inhibits human Kv11.1/KCNH2/ERG1 (IC(50)=34 nM), rat Kv11.1/KCNH2/ERG1 and Kv11.3/KCNH7/ERG3 voltage-gated potassium channels in a similar potency. It acts as a gating-modifier toxin that shifts the voltage-dependence of ERG activation in the positive direction and suppresses its current amplitudes elicited by strong depolarizing pulses. On sodium channels, it blocks Nav1.2/SCN2A (EC(50)=31 nM), Nav1.3/SCN3A, Nav1.4/SCN4A, Nav1.5/SCN5A, Nav1.6/SCN8A, Nav1.8/SCN10A (EC(50)=92 nM). It may act by binding at site 1 or close by, only when the pore is in an open configuration. Shows antibacterial activity against the Gram-negative bacterium S.typhimurium, but not on the bacteria B.subtilis, S.aureus, and P.aeruginosa. In vivo, this toxin does not induce neurotoxic symptoms when injected into mice. The chain is Kappa-actitoxin-Ael2a from Anthopleura elegantissima (Green aggregating anemone).